Consider the following 258-residue polypeptide: 4-oxalmesaconate hydratase (258 aa).

Zn(2+)-binding residues include His-28, Asp-31, and His-141.

It belongs to the MshB deacetylase family. Zn(2+) is required as a cofactor.

It carries out the reaction 2-hydroxy-4-oxobutane-1,2,4-tricarboxylate = 4-carboxy-2-hydroxy-cis,cis-muconate + H2O. In terms of biological role, catalyzes the conversion of oxalomesaconic acid enol (OMAenol) to 4-carboxy-4-hydroxy-2-oxoadipic acid (CHA). Mediates the third step of gallate degradation pathway. The polypeptide is 4-oxalmesaconate hydratase (galB) (Pseudomonas putida (strain ATCC 47054 / DSM 6125 / CFBP 8728 / NCIMB 11950 / KT2440)).